We begin with the raw amino-acid sequence, 185 residues long: Peptidyl-tRNA hydrolase (185 aa).

Tyrosine 14 contacts tRNA. The active-site Proton acceptor is histidine 19. TRNA is bound by residues tyrosine 65, asparagine 67, and asparagine 113.

This sequence belongs to the PTH family. Monomer.

It localises to the cytoplasm. The catalysed reaction is an N-acyl-L-alpha-aminoacyl-tRNA + H2O = an N-acyl-L-amino acid + a tRNA + H(+). Its function is as follows. Hydrolyzes ribosome-free peptidyl-tRNAs (with 1 or more amino acids incorporated), which drop off the ribosome during protein synthesis, or as a result of ribosome stalling. In terms of biological role, catalyzes the release of premature peptidyl moieties from peptidyl-tRNA molecules trapped in stalled 50S ribosomal subunits, and thus maintains levels of free tRNAs and 50S ribosomes. The polypeptide is Peptidyl-tRNA hydrolase (Rickettsia akari (strain Hartford)).